The primary structure comprises 740 residues: Ion-translocating oxidoreductase complex subunit C (740 aa).

4Fe-4S ferredoxin-type domains follow at residues 369–397 (GEPQ…QQLY) and 407–436 (KATT…VQYF). [4Fe-4S] cluster contacts are provided by C377, C380, C383, C387, C416, C419, C422, and C426. The segment at 598-716 (AKARKLEQQQ…EPEEQVDPRK (119 aa)) is disordered.

This sequence belongs to the 4Fe4S bacterial-type ferredoxin family. RnfC subfamily. In terms of assembly, the complex is composed of six subunits: RsxA, RsxB, RsxC, RsxD, RsxE and RsxG. [4Fe-4S] cluster is required as a cofactor.

Its subcellular location is the cell inner membrane. In terms of biological role, part of a membrane-bound complex that couples electron transfer with translocation of ions across the membrane. Required to maintain the reduced state of SoxR. In Shigella flexneri serotype 5b (strain 8401), this protein is Ion-translocating oxidoreductase complex subunit C.